A 486-amino-acid chain; its full sequence is Vacuolar protein sorting-associated protein 73 (486 aa).

The Cytoplasmic portion of the chain corresponds to 1–26 (MNRILSSASLLSNVSMPRQNKHKITK). A helical transmembrane segment spans residues 27 to 47 (ALCYAIIVASIGSIQFGYHLS). At 48 to 90 (ELNAPQQVLSCSEFDIPMEGYPYDRTWLGKRGYKQCIPLNDEQ) the chain is on the mitochondrial intermembrane side. A helical membrane pass occupies residues 91-111 (IGIVTSVFCIGGILGSYFATS). The Cytoplasmic segment spans residues 112 to 119 (LANIYGRK). The chain crosses the membrane as a helical span at residues 120-140 (FSSLINCTLNIVGSLIIFNSN). Topologically, residues 141-146 (SYRGLI) are mitochondrial intermembrane. The helical transmembrane segment at 147–167 (IGRILVGISCGSLIVIIPLFI) threads the bilayer. The Cytoplasmic segment spans residues 168–178 (KEVAPSGWEGL). The helical transmembrane segment at 179-199 (LGSMTQICIRLGVLLTQGIAL) threads the bilayer. Over 200–208 (PLTDSYRWR) the chain is Mitochondrial intermembrane. The chain crosses the membrane as a helical span at residues 209 to 229 (WILFGSFLIAVLNFFMWFIVD). Residues 230 to 305 (ESPKWLLAHG…RDRTNVKSRH (76 aa)) are Cytoplasmic-facing. Residues 306–326 (VITVLLFGQQFCGINSIVLYG) form a helical membrane-spanning segment. The Mitochondrial intermembrane segment spans residues 327 to 342 (TKIISQLYPQHAIRIN). The chain crosses the membrane as a helical span at residues 343–363 (FFISMVNVLVTILVSLLIHSL). The Cytoplasmic portion of the chain corresponds to 364–366 (PRK). Residues 367 to 387 (PLLMTSTVLVSVTAFIMGIAM) traverse the membrane as a helical segment. The Mitochondrial intermembrane portion of the chain corresponds to 388 to 396 (NHNKMNLLI). Residues 397–417 (VFSFIYMGVFTMGLNPLPFII) traverse the membrane as a helical segment. The Cytoplasmic portion of the chain corresponds to 418 to 432 (MREVSKPQDMVLAQR). The chain crosses the membrane as a helical span at residues 433–453 (YGTICNWVGTFIIAYTFPIIH). Asp-454 is a topological domain (mitochondrial intermembrane). A helical transmembrane segment spans residues 455–475 (VLSGYVFIIFAIIACSISAFI). The Cytoplasmic portion of the chain corresponds to 476–486 (WKKVPETKRSG).

It belongs to the major facilitator superfamily. Sugar transporter (TC 2.A.1.1) family.

The protein localises to the mitochondrion membrane. Functionally, may be involved in vacuolar protein sorting. This Saccharomyces cerevisiae (strain ATCC 204508 / S288c) (Baker's yeast) protein is Vacuolar protein sorting-associated protein 73 (VPS73).